Reading from the N-terminus, the 299-residue chain is ATP phosphoribosyltransferase (299 aa).

This sequence belongs to the ATP phosphoribosyltransferase family. Long subfamily. In terms of assembly, equilibrium between an active dimeric form, an inactive hexameric form and higher aggregates. Interconversion between the various forms is largely reversible and is influenced by the natural substrates and inhibitors of the enzyme. Requires Mg(2+) as cofactor.

It is found in the cytoplasm. The catalysed reaction is 1-(5-phospho-beta-D-ribosyl)-ATP + diphosphate = 5-phospho-alpha-D-ribose 1-diphosphate + ATP. The protein operates within amino-acid biosynthesis; L-histidine biosynthesis; L-histidine from 5-phospho-alpha-D-ribose 1-diphosphate: step 1/9. With respect to regulation, feedback inhibited by histidine. Its function is as follows. Catalyzes the condensation of ATP and 5-phosphoribose 1-diphosphate to form N'-(5'-phosphoribosyl)-ATP (PR-ATP). Has a crucial role in the pathway because the rate of histidine biosynthesis seems to be controlled primarily by regulation of HisG enzymatic activity. The protein is ATP phosphoribosyltransferase of Buchnera aphidicola subsp. Acyrthosiphon pisum (strain 5A).